The sequence spans 468 residues: Inositol polyphosphate 5-phosphatase K (468 aa).

Positions 34 to 337 are catalytic; sequence VHVVTWNVAS…SDHKPVTGTF (304 aa). Residues 318–448 form a required for interaction with GPR78 and PAK1 region; sequence NYVSHMAYSI…HSVVGISQPF (131 aa). The tract at residues 340–468 is required for ruffle localization; that stretch reads ELNPLMSVPL…DTLYEPEPQI (129 aa).

This sequence belongs to the inositol 1,4,5-trisphosphate 5-phosphatase type II family. Interacts with GPR78; necessary for INPP5K localization at the endoplasmic reticulum. Interacts with PAK1; competes with GPR78. As to expression, expressed in the skeletal muscle and the eye.

It localises to the endoplasmic reticulum. It is found in the cytoplasm. It catalyses the reaction 1D-myo-inositol 1,4,5-trisphosphate + H2O = 1D-myo-inositol 1,4-bisphosphate + phosphate. The enzyme catalyses 1,2-dioctanoyl-sn-glycero-3-phospho-(1D-myo-inositol-3,4,5-trisphosphate) + H2O = 1,2-dioctanoyl-sn-glycero-3-phospho-(1D-myo-inositol-3,4-bisphosphate) + phosphate. The catalysed reaction is 1D-myo-inositol 1,3,4,5-tetrakisphosphate + H2O = 1D-myo-inositol 1,3,4-trisphosphate + phosphate. It carries out the reaction a 1,2-diacyl-sn-glycero-3-phospho-(1D-myo-inositol-4,5-bisphosphate) + H2O = a 1,2-diacyl-sn-glycero-3-phospho-(1D-myo-inositol 4-phosphate) + phosphate. It catalyses the reaction a 1,2-diacyl-sn-glycero-3-phospho-(1D-myo-inositol-3,4,5-trisphosphate) + H2O = a 1,2-diacyl-sn-glycero-3-phospho-(1D-myo-inositol-3,4-bisphosphate) + phosphate. Its function is as follows. Inositol 5-phosphatase which acts on inositol 1,4,5-trisphosphate, inositol 1,3,4,5-tetrakisphosphate, phosphatidylinositol 4,5-bisphosphate and phosphatidylinositol 3,4,5-trisphosphate. Has 6-fold higher affinity for phosphatidylinositol 4,5-bisphosphate than for inositol 1,4,5-trisphosphate. Negatively regulates assembly of the actin cytoskeleton. Controls insulin-dependent glucose uptake among inositol 3,4,5-trisphosphate phosphatases; therefore, is the specific regulator for insulin signaling in skeletal muscle. The chain is Inositol polyphosphate 5-phosphatase K from Mus musculus (Mouse).